Consider the following 613-residue polypeptide: Portal protein (613 aa).

Positions Ala577 to Ser613 are disordered. Residues Gly592 to Arg605 show a composition bias toward basic and acidic residues.

This sequence belongs to the herpesviridae portal protein family. As to quaternary structure, homododecamerizes. Interacts with terminase subunits TRM1 and TRM3.

Its subcellular location is the virion. The protein resides in the host nucleus. It localises to the host cytoplasm. Functionally, forms a portal in the viral capsid through which viral DNA is translocated during DNA packaging. Assembles as a dodecamer at a single fivefold axe of the T=16 icosahedric capsid. Binds to the molecular motor that translocates the viral DNA, termed terminase. This Epstein-Barr virus (strain B95-8) (HHV-4) protein is Portal protein.